We begin with the raw amino-acid sequence, 424 residues long: Adenylosuccinate synthetase (424 aa).

Residues glycine 12–lysine 18 and glycine 40–threonine 42 each bind GTP. Aspartate 13 (proton acceptor) is an active-site residue. Mg(2+) contacts are provided by aspartate 13 and glycine 40. IMP is bound by residues aspartate 13–lysine 16, asparagine 38–histidine 41, threonine 130, arginine 144, asparagine 220, threonine 235, and arginine 299. Histidine 41 functions as the Proton donor in the catalytic mechanism. Valine 295–arginine 301 serves as a coordination point for substrate. Residues arginine 301, lysine 327–aspartate 329, and glycine 412–glycine 414 each bind GTP.

Belongs to the adenylosuccinate synthetase family. As to quaternary structure, homodimer. Requires Mg(2+) as cofactor.

It is found in the cytoplasm. It catalyses the reaction IMP + L-aspartate + GTP = N(6)-(1,2-dicarboxyethyl)-AMP + GDP + phosphate + 2 H(+). Its pathway is purine metabolism; AMP biosynthesis via de novo pathway; AMP from IMP: step 1/2. Functionally, plays an important role in the de novo pathway and in the salvage pathway of purine nucleotide biosynthesis. Catalyzes the first committed step in the biosynthesis of AMP from IMP. This chain is Adenylosuccinate synthetase, found in Aspergillus clavatus (strain ATCC 1007 / CBS 513.65 / DSM 816 / NCTC 3887 / NRRL 1 / QM 1276 / 107).